The following is a 305-amino-acid chain: Protoheme IX farnesyltransferase (305 aa).

9 helical membrane-spanning segments follow: residues 31–51 (IQVL…KGHV), 53–73 (PLLL…ANAF), 98–118 (ILPW…FAVL), 124–144 (LFAA…YTLW), 153–173 (IVIG…AVTG), 181–201 (VLFG…AMMI), 221–241 (ATAR…LVLY), 242–262 (PLGT…LWLI), and 285–305 (SIFY…FLFA).

Belongs to the UbiA prenyltransferase family. Protoheme IX farnesyltransferase subfamily.

Its subcellular location is the cell inner membrane. It catalyses the reaction heme b + (2E,6E)-farnesyl diphosphate + H2O = Fe(II)-heme o + diphosphate. It functions in the pathway porphyrin-containing compound metabolism; heme O biosynthesis; heme O from protoheme: step 1/1. Functionally, converts heme B (protoheme IX) to heme O by substitution of the vinyl group on carbon 2 of heme B porphyrin ring with a hydroxyethyl farnesyl side group. The chain is Protoheme IX farnesyltransferase from Gloeobacter violaceus (strain ATCC 29082 / PCC 7421).